A 319-amino-acid polypeptide reads, in one-letter code: Curved DNA-binding protein (319 aa).

A J domain is found at 5–69 (DYYKILGVEP…QKRAEFDEIR (65 aa)).

The protein resides in the cytoplasm. It is found in the nucleoid. Its function is as follows. DNA-binding protein that preferentially recognizes a curved DNA sequence. It is probably a functional analog of DnaJ; displays overlapping activities with DnaJ, but functions under different conditions, probably acting as a molecular chaperone in an adaptive response to environmental stresses other than heat shock. Lacks autonomous chaperone activity; binds native substrates and targets them for recognition by DnaK. Its activity is inhibited by the binding of CbpM. The chain is Curved DNA-binding protein from Pseudomonas putida (strain ATCC 47054 / DSM 6125 / CFBP 8728 / NCIMB 11950 / KT2440).